A 223-amino-acid polypeptide reads, in one-letter code: Ribosome maturation factor RimM (223 aa).

The segment covering 1-12 (MARRPGSSSRGP) has biased composition (low complexity). Disordered regions lie at residues 1–44 (MARR…DPGL) and 204–223 (ADPP…DDPG). The PRC barrel domain maps to 136-210 (EDEFFLTDLI…KVVADPPDDL (75 aa)).

This sequence belongs to the RimM family. As to quaternary structure, binds ribosomal protein uS19.

It is found in the cytoplasm. An accessory protein needed during the final step in the assembly of 30S ribosomal subunit, possibly for assembly of the head region. Essential for efficient processing of 16S rRNA. May be needed both before and after RbfA during the maturation of 16S rRNA. It has affinity for free ribosomal 30S subunits but not for 70S ribosomes. The chain is Ribosome maturation factor RimM from Methylorubrum extorquens (strain PA1) (Methylobacterium extorquens).